The chain runs to 606 residues: MCGISACLNHTNNSAMTSVVNALTKLQNRGYDSAGICTTSNGKFNFVKSVSDDTNNAIHYIKNNPLANHHCSIAIGHTRWATHGEKTIENAHPHFDASGRFSLIHNGIIENYDQIKSMLVESQNYQFYGQTDTEVAVAYLSYLLSENKTWFDFNESLKGSWAIIALDKFNPEKLYFMRNGSPLIIGFNETNTKAMIVSELSGFDSDISQYCIVGDNDYGYITNNNDKYIIKSQQHYQMISMGKIVMDLTPSPYKHWTQREIYDQPNAIHSLITERIVDSQLFFPEFNTINFTLVEHIVLLGCGTSYHAAQIGRRYIREFRPNITVDVIDGADFEETDIPKSRNTLLILLSQSGETKDLYRALVIGKQHSLKTIGIINVENSLIAREVDTVLYLRAGRENAVASTKSFTNQVLMLFMLALKINLSLDNSQLDYYTMSLNNFPIEFKKIIDQSVNEIPKLLEFFDNQTSCFILGKFGLEWIAKEGSLKIKEISYVHSEGYSSAALKHGPFALLHQNIPVVLLANDDSYFSKIENANSEIRSRKAKVIFITNKLIDNHCTDYLIHINTKSPLFHLLCIVPLQLLAYHLALSKGINPDYPRNLAKVVTVE.

Cysteine 2 serves as the catalytic For GATase activity. A Glutamine amidotransferase type-2 domain is found at 2 to 224 (CGISACLNHT…DNDYGYITNN (223 aa)). 2 consecutive SIS domains span residues 282–427 (FFPE…SLDN) and 458–596 (LLEF…PDYP).

It carries out the reaction D-fructose 6-phosphate + L-glutamine = D-glucosamine 6-phosphate + L-glutamate. Its pathway is nucleotide-sugar biosynthesis; UDP-N-acetyl-alpha-D-glucosamine biosynthesis; alpha-D-glucosamine 6-phosphate from D-fructose 6-phosphate: step 1/1. Controls the flux of glucose into the hexosamine pathway. Most likely involved in regulating the availability of precursors for glycosylation of proteins (Potential). The sequence is that of Probable glutamine--fructose-6-phosphate aminotransferase [isomerizing] from Acanthamoeba polyphaga (Amoeba).